The primary structure comprises 246 residues: Probable transcriptional regulatory protein COSY_0365 (246 aa).

The protein belongs to the TACO1 family.

It localises to the cytoplasm. This is Probable transcriptional regulatory protein COSY_0365 from Vesicomyosocius okutanii subsp. Calyptogena okutanii (strain HA).